The following is an 878-amino-acid chain: Phosphoenolpyruvate carboxylase (878 aa).

Residues histidine 138 and lysine 545 contribute to the active site.

It belongs to the PEPCase type 1 family. It depends on Mg(2+) as a cofactor.

The enzyme catalyses oxaloacetate + phosphate = phosphoenolpyruvate + hydrogencarbonate. Functionally, forms oxaloacetate, a four-carbon dicarboxylic acid source for the tricarboxylic acid cycle. This is Phosphoenolpyruvate carboxylase from Shewanella halifaxensis (strain HAW-EB4).